Consider the following 261-residue polypeptide: Probable septum site-determining protein MinC (261 aa).

A disordered region spans residues 106 to 145; sequence RAPAAKPADEAEPAAVPAVETAAAPAAAAAPEQPSEPAPT. Over residues 118–144 the composition is skewed to low complexity; it reads PAAVPAVETAAAPAAAAAPEQPSEPAP.

The protein belongs to the MinC family. As to quaternary structure, interacts with MinD and FtsZ.

Cell division inhibitor that blocks the formation of polar Z ring septums. Rapidly oscillates between the poles of the cell to destabilize FtsZ filaments that have formed before they mature into polar Z rings. Prevents FtsZ polymerization. The chain is Probable septum site-determining protein MinC from Burkholderia orbicola (strain AU 1054).